The following is a 382-amino-acid chain: MLSSPTVILQPYGLPVYPQTASCYPGIVQGAAAQEAGPGNGDPSLPQVYAPPPSYPPPGQAPPTPAARLPPLDFSAAHPNSEYADHHQLRVYQGPQHDGTESITASNTDDSLAPVTSDPQSLSVSVASGSGAAGGSDEEGGGKAQPKRLHVSNIPFRFRDPDLRQMFGQFGKILDVEIIFNERGSKGFGFVTFESAVEADRAREKLNGTIVEGRKIEVNNATARVVTKKPQTPLVNAAGWKINPVMGAMYAPELYTVASFPYPVPTPTLAYRGSGLRGRGRAVYNTIRSAAAAATPAAVPAYPGVVYQEGLYGAEVYGGYPATYRVAQSASAAATATYSDGYGRVYATATDPYHHSVGPTTTYGVGTMASLYRGGYNRFTPY.

Disordered stretches follow at residues 34–79 and 94–148; these read QEAG…AAHP and GPQH…QPKR. Residues 49–65 are compositionally biased toward pro residues; the sequence is YAPPPSYPPPGQAPPTP. Over residues 101-110 the composition is skewed to polar residues; that stretch reads ESITASNTDD. Residues 147 to 223 form the RRM domain; the sequence is KRLHVSNIPF…RKIEVNNATA (77 aa).

Expressed during muscle development in adaxial cells, somites, cardiac precursors, finbuds and jaw muscle cells.

Its subcellular location is the nucleus. RNA-binding protein that regulates alternative splicing events by binding to 5'-GCAUG-3' elements. Regulates alternative splicing of tissue-specific exons. This Danio rerio (Zebrafish) protein is RNA binding protein fox-1 homolog 1-like (rbfox1l).